Here is a 238-residue protein sequence, read N- to C-terminus: Ureidoacrylate amidohydrolase RutB (238 aa).

Asp35 (proton acceptor) is an active-site residue. Residue Lys144 is part of the active site. Cys177 (nucleophile) is an active-site residue.

Belongs to the isochorismatase family. RutB subfamily.

The enzyme catalyses (Z)-3-ureidoacrylate + H2O + H(+) = (Z)-3-aminoacrylate + NH4(+) + CO2. It catalyses the reaction (Z)-3-ureidoacrylate + H2O = (Z)-3-aminoacrylate + carbamate + H(+). It carries out the reaction (Z)-2-methylureidoacrylate + H2O + H(+) = (Z)-2-methylaminoacrylate + NH4(+) + CO2. Its function is as follows. Hydrolyzes ureidoacrylate to form aminoacrylate and carbamate. The carbamate hydrolyzes spontaneously, thereby releasing one of the nitrogen atoms of the pyrimidine ring as ammonia and one of its carbon atoms as CO2. The polypeptide is Ureidoacrylate amidohydrolase RutB (Caulobacter vibrioides (strain NA1000 / CB15N) (Caulobacter crescentus)).